Reading from the N-terminus, the 106-residue chain is Nucleoid-associated protein Fjoh_2555 (106 aa).

The protein belongs to the YbaB/EbfC family. In terms of assembly, homodimer.

It is found in the cytoplasm. The protein resides in the nucleoid. In terms of biological role, binds to DNA and alters its conformation. May be involved in regulation of gene expression, nucleoid organization and DNA protection. The polypeptide is Nucleoid-associated protein Fjoh_2555 (Flavobacterium johnsoniae (strain ATCC 17061 / DSM 2064 / JCM 8514 / BCRC 14874 / CCUG 350202 / NBRC 14942 / NCIMB 11054 / UW101) (Cytophaga johnsonae)).